The primary structure comprises 28 residues: Ribosome-inactivating protein pleuturegin (28 aa).

Belongs to the ribosome-inactivating protein family.

It catalyses the reaction Endohydrolysis of the N-glycosidic bond at one specific adenosine on the 28S rRNA.. Its function is as follows. Inhibits protein synthesis in animal cells. Does not possess ribonuclease activity. The sequence is that of Ribosome-inactivating protein pleuturegin from Pleurotus tuber-regium (King tuber oyster mushroom).